The primary structure comprises 354 residues: Lysine racemase (354 aa).

At lysine 36 the chain carries N6-(pyridoxal phosphate)lysine.

This sequence belongs to the alanine racemase family. Homodimer. Pyridoxal 5'-phosphate serves as cofactor.

The catalysed reaction is L-lysine = D-lysine. It carries out the reaction L-ornithine = D-ornithine. It functions in the pathway cell wall biogenesis; peptidoglycan biosynthesis. Catalyzes the interconversion of D-lysine and L-lysine. Has also high activity toward ornithine, and weaker activity toward alanine. Contributes to production of D-lysine and D-alanine for use as peptidoglycan components. This chain is Lysine racemase, found in Thermotoga maritima (strain ATCC 43589 / DSM 3109 / JCM 10099 / NBRC 100826 / MSB8).